A 216-amino-acid polypeptide reads, in one-letter code: MAFLLRAVPRLQGPAAWRRPLQQLWCRAGQGDSIRWVGSRSPPSQEKPPGTETEKFHTIYRFNAIRALGFLSRLKLAQTAVTVVALPPGFYCYSQGLMTLSSLGLMSGIASFALVMLCWMSHFFRRLVGILYVNESGTLLRVAHLTFWGWRQDTYCAVSDMIPLSESEERVQDVFVRIQQYSGKQTFYLTLRYGRILDRDRFSQVFGTLATLKNSK.

Over 1–68 the chain is Mitochondrial matrix; it reads MAFLLRAVPR…IYRFNAIRAL (68 aa). A helical membrane pass occupies residues 69–91; the sequence is GFLSRLKLAQTAVTVVALPPGFY. Residues 92-103 lie on the Mitochondrial intermembrane side of the membrane; sequence CYSQGLMTLSSL. The chain crosses the membrane as a helical span at residues 104–124; the sequence is GLMSGIASFALVMLCWMSHFF. The Mitochondrial matrix portion of the chain corresponds to 125-216; that stretch reads RRLVGILYVN…GTLATLKNSK (92 aa).

It belongs to the TMEM186 family. As to quaternary structure, part of the mitochondrial complex I assembly/MCIA complex that comprises at least the core subunits TMEM126B, NDUFAF1, ECSIT and ACAD9 and complement subunits such as COA1 and TMEM186. Interacts with MT-ND3.

It localises to the mitochondrion inner membrane. Functionally, as part of the MCIA complex, required for efficient assembly of the mitochondrial complex I. The polypeptide is Transmembrane protein 186 (Rattus norvegicus (Rat)).